Here is a 245-residue protein sequence, read N- to C-terminus: Phycocyanobilin:ferredoxin oxidoreductase (245 aa).

This sequence belongs to the HY2 family.

The catalysed reaction is (2R,3Z)-phycocyanobilin + 4 oxidized [2Fe-2S]-[ferredoxin] = biliverdin IXalpha + 4 reduced [2Fe-2S]-[ferredoxin] + 4 H(+). Its function is as follows. Catalyzes the four-electron reduction of biliverdin IX-alpha (2-electron reduction at both the A and D rings); the reaction proceeds via an isolatable 2-electron intermediate, 181,182-dihydrobiliverdin. The chain is Phycocyanobilin:ferredoxin oxidoreductase (pcyA) from Nostoc punctiforme (strain ATCC 29133 / PCC 73102).